Here is a 25-residue protein sequence, read N- to C-terminus: Metallothionein (25 aa).

Positions 3, 5, 11, 13, 18, 20, and 23 each coordinate Cu(+).

It belongs to the metallothionein superfamily. Type 8 family.

Functionally, the metallothioneins are involved in the cellular sequestration of toxic metal ions. Binds six copper (cuprous) ions. This is Metallothionein from Agaricus bisporus (White button mushroom).